Here is a 384-residue protein sequence, read N- to C-terminus: Dual-specificity RNA methyltransferase RlmN (384 aa).

Glutamate 93 functions as the Proton acceptor in the catalytic mechanism. One can recognise a Radical SAM core domain in the interval 99-339; that stretch reads EDTRGTLCVS…TTIRKTRGDD (241 aa). Cysteine 106 and cysteine 344 form a disulfide bridge. The [4Fe-4S] cluster site is built by cysteine 113, cysteine 117, and cysteine 120. S-adenosyl-L-methionine contacts are provided by residues 170 to 171, serine 202, 224 to 226, and asparagine 301; these read GE and SLH. Cysteine 344 (S-methylcysteine intermediate) is an active-site residue.

Belongs to the radical SAM superfamily. RlmN family. [4Fe-4S] cluster serves as cofactor.

It is found in the cytoplasm. It carries out the reaction adenosine(2503) in 23S rRNA + 2 reduced [2Fe-2S]-[ferredoxin] + 2 S-adenosyl-L-methionine = 2-methyladenosine(2503) in 23S rRNA + 5'-deoxyadenosine + L-methionine + 2 oxidized [2Fe-2S]-[ferredoxin] + S-adenosyl-L-homocysteine. The catalysed reaction is adenosine(37) in tRNA + 2 reduced [2Fe-2S]-[ferredoxin] + 2 S-adenosyl-L-methionine = 2-methyladenosine(37) in tRNA + 5'-deoxyadenosine + L-methionine + 2 oxidized [2Fe-2S]-[ferredoxin] + S-adenosyl-L-homocysteine. Functionally, specifically methylates position 2 of adenine 2503 in 23S rRNA and position 2 of adenine 37 in tRNAs. m2A2503 modification seems to play a crucial role in the proofreading step occurring at the peptidyl transferase center and thus would serve to optimize ribosomal fidelity. This is Dual-specificity RNA methyltransferase RlmN from Cupriavidus metallidurans (strain ATCC 43123 / DSM 2839 / NBRC 102507 / CH34) (Ralstonia metallidurans).